A 580-amino-acid chain; its full sequence is Phosphomethylpyrimidine synthase (580 aa).

Residues 1–58 (MTPTQNEIHPKHSYSPIRKHGLEVPETEIALDDSPSGPNEPFRIYRTRGPETDPTLGL) form a disordered region. Substrate contacts are provided by residues Asn180, Met209, Tyr238, His274, 294–296 (SRG), 335–338 (DGLR), and Glu374. Zn(2+) is bound at residue His378. Residue Tyr401 coordinates substrate. His442 contacts Zn(2+). [4Fe-4S] cluster is bound by residues Cys522, Cys525, and Cys530. A disordered region spans residues 554–580 (VGASDSTEGMKEKSREFVAGGGEVYRE).

This sequence belongs to the ThiC family. [4Fe-4S] cluster is required as a cofactor.

The enzyme catalyses 5-amino-1-(5-phospho-beta-D-ribosyl)imidazole + S-adenosyl-L-methionine = 4-amino-2-methyl-5-(phosphooxymethyl)pyrimidine + CO + 5'-deoxyadenosine + formate + L-methionine + 3 H(+). Its pathway is cofactor biosynthesis; thiamine diphosphate biosynthesis. Catalyzes the synthesis of the hydroxymethylpyrimidine phosphate (HMP-P) moiety of thiamine from aminoimidazole ribotide (AIR) in a radical S-adenosyl-L-methionine (SAM)-dependent reaction. This is Phosphomethylpyrimidine synthase from Corynebacterium efficiens (strain DSM 44549 / YS-314 / AJ 12310 / JCM 11189 / NBRC 100395).